The primary structure comprises 406 residues: Renin (406 aa).

Residues 1–23 form the signal peptide; that stretch reads MDGWRRMPRWGLLLLLWGSCTFG. The propeptide at 24–66 is activation peptide; it reads LPTDTTTFKRIFLKRMPSIRESLKERGVDMARLGPEWSQPMKR. Residue N71 is glycosylated (N-linked (GlcNAc...) asparagine). The Peptidase A1 domain occupies 86-403; sequence YYGEIGIGTP…DRRNNRIGFA (318 aa). The active site involves D104. The cysteines at positions 117 and 124 are disulfide-linked. The N-linked (GlcNAc...) asparagine glycan is linked to N141. A disulfide bond links C283 and C287. D292 is an active-site residue. C325 and C362 are joined by a disulfide.

This sequence belongs to the peptidase A1 family. As to quaternary structure, interacts with ATP6AP2.

The protein localises to the secreted. It localises to the membrane. The enzyme catalyses Cleavage of Leu-|-Xaa bond in angiotensinogen to generate angiotensin I.. Its activity is regulated as follows. Interaction with ATP6AP2 results in a 5-fold increased efficiency in angiotensinogen processing. Functionally, renin is a highly specific endopeptidase, whose only known function is to generate angiotensin I from angiotensinogen in the plasma, initiating a cascade of reactions that produce an elevation of blood pressure and increased sodium retention by the kidney. This is Renin (REN) from Macaca mulatta (Rhesus macaque).